A 104-amino-acid polypeptide reads, in one-letter code: DNA-directed RNA polymerase subunit omega (104 aa).

This sequence belongs to the RNA polymerase subunit omega family. In terms of assembly, the RNAP catalytic core consists of 2 alpha, 1 beta, 1 beta' and 1 omega subunit. When a sigma factor is associated with the core the holoenzyme is formed, which can initiate transcription.

It catalyses the reaction RNA(n) + a ribonucleoside 5'-triphosphate = RNA(n+1) + diphosphate. Functionally, promotes RNA polymerase assembly. Latches the N- and C-terminal regions of the beta' subunit thereby facilitating its interaction with the beta and alpha subunits. In Streptococcus pyogenes serotype M1, this protein is DNA-directed RNA polymerase subunit omega (rpoZ).